We begin with the raw amino-acid sequence, 320 residues long: Phosphatidylserine decarboxylase proenzyme (320 aa).

Active-site charge relay system; for autoendoproteolytic cleavage activity residues include D90, H147, and S254. S254 serves as the catalytic Schiff-base intermediate with substrate; via pyruvic acid; for decarboxylase activity. Pyruvic acid (Ser); by autocatalysis is present on S254. The tract at residues 288–320 is disordered; the sequence is EASTAAEPAPLPEEEIRAEHRASPLVDDTQDQG.

Belongs to the phosphatidylserine decarboxylase family. PSD-B subfamily. Prokaryotic type I sub-subfamily. As to quaternary structure, heterodimer of a large membrane-associated beta subunit and a small pyruvoyl-containing alpha subunit. Requires pyruvate as cofactor. Is synthesized initially as an inactive proenzyme. Formation of the active enzyme involves a self-maturation process in which the active site pyruvoyl group is generated from an internal serine residue via an autocatalytic post-translational modification. Two non-identical subunits are generated from the proenzyme in this reaction, and the pyruvate is formed at the N-terminus of the alpha chain, which is derived from the carboxyl end of the proenzyme. The autoendoproteolytic cleavage occurs by a canonical serine protease mechanism, in which the side chain hydroxyl group of the serine supplies its oxygen atom to form the C-terminus of the beta chain, while the remainder of the serine residue undergoes an oxidative deamination to produce ammonia and the pyruvoyl prosthetic group on the alpha chain. During this reaction, the Ser that is part of the protease active site of the proenzyme becomes the pyruvoyl prosthetic group, which constitutes an essential element of the active site of the mature decarboxylase.

Its subcellular location is the cell membrane. It carries out the reaction a 1,2-diacyl-sn-glycero-3-phospho-L-serine + H(+) = a 1,2-diacyl-sn-glycero-3-phosphoethanolamine + CO2. It participates in phospholipid metabolism; phosphatidylethanolamine biosynthesis; phosphatidylethanolamine from CDP-diacylglycerol: step 2/2. Its function is as follows. Catalyzes the formation of phosphatidylethanolamine (PtdEtn) from phosphatidylserine (PtdSer). This chain is Phosphatidylserine decarboxylase proenzyme, found in Klebsiella pneumoniae (strain 342).